We begin with the raw amino-acid sequence, 175 residues long: NADH-ubiquinone oxidoreductase chain 6 (175 aa).

5 consecutive transmembrane segments (helical) span residues 1-21 (MMLYIVFILSVIFVIGFVGFS), 25-45 (SPIYGGLGLIVSGGVGCGIVL), 47-67 (FGGSFLGLMVFLIYLGGMMVV), 88-108 (AVLGAFITALLMEFFMVYYVL), and 149-169 (YGTWLVIVTGWSLFIGVVVIM).

The protein belongs to the complex I subunit 6 family. Core subunit of respiratory chain NADH dehydrogenase (Complex I) which is composed of 45 different subunits.

The protein localises to the mitochondrion inner membrane. It carries out the reaction a ubiquinone + NADH + 5 H(+)(in) = a ubiquinol + NAD(+) + 4 H(+)(out). In terms of biological role, core subunit of the mitochondrial membrane respiratory chain NADH dehydrogenase (Complex I) which catalyzes electron transfer from NADH through the respiratory chain, using ubiquinone as an electron acceptor. Essential for the catalytic activity and assembly of complex I. This chain is NADH-ubiquinone oxidoreductase chain 6 (MT-ND6), found in Bos mutus grunniens (Wild yak).